The primary structure comprises 743 residues: Peptide transporter family 1 (743 aa).

The tract at residues 1-28 (MASEITNGKNGQNGKNGQKEESDSQIAP) is disordered. A compositionally biased stretch (low complexity) spans 7–16 (NGKNGQNGKN). A run of 10 helical transmembrane segments spans residues 74–94 (VLFH…ALIA), 104–124 (ILYL…GAVP), 132–152 (AVTV…KPCV), 173–193 (FSLF…FTPI), 207–227 (FSLA…IFMA), 334–354 (VVNP…IYPA), 364–384 (LQKL…SAGL), 597–619 (LPQI…EFSY), 629–649 (VLQA…VVIA), and 659–679 (GEFT…LWLA).

Belongs to the major facilitator superfamily. Proton-dependent oligopeptide transporter (POT/PTR) (TC 2.A.17) family. Expressed in thorax and abdomen of females: apical epithelial membranes of midgut, rectum, and reproductive tract. Also expressed in neuropil of the central nervous system, with elevated expression within the alpha- and beta-lobes of the mushroom bodies.

The protein resides in the membrane. Its function is as follows. Important role in absorption of dietary peptides. High-affinity transporter of alanylalanine. Dipeptide transport activity is proton dependent. The sequence is that of Peptide transporter family 1 (yin) from Drosophila melanogaster (Fruit fly).